Reading from the N-terminus, the 227-residue chain is ATP synthase F(0) complex subunit a (227 aa).

6 helical membrane-spanning segments follow: residues 14–34 (YLGI…FPLP), 69–89 (WALL…LGLL), 98–118 (QLSL…IIGL), 132–152 (EGTP…SLFI), 179–199 (VFVL…VLFL), and 202–222 (LLEV…LSLY).

It belongs to the ATPase A chain family. Component of the ATP synthase complex composed at least of ATP5F1A/subunit alpha, ATP5F1B/subunit beta, ATP5MC1/subunit c (homooctomer), MT-ATP6/subunit a, MT-ATP8/subunit 8, ATP5ME/subunit e, ATP5MF/subunit f, ATP5MG/subunit g, ATP5MK/subunit k, ATP5MJ/subunit j, ATP5F1C/subunit gamma, ATP5F1D/subunit delta, ATP5F1E/subunit epsilon, ATP5PF/subunit F6, ATP5PB/subunit b, ATP5PD/subunit d, ATP5PO/subunit OSCP. ATP synthase complex consists of a soluble F(1) head domain (subunits alpha(3) and beta(3)) - the catalytic core - and a membrane F(0) domain - the membrane proton channel (subunits c, a, 8, e, f, g, k and j). These two domains are linked by a central stalk (subunits gamma, delta, and epsilon) rotating inside the F1 region and a stationary peripheral stalk (subunits F6, b, d, and OSCP). Interacts with DNAJC30; interaction is direct.

Its subcellular location is the mitochondrion inner membrane. The enzyme catalyses H(+)(in) = H(+)(out). Its function is as follows. Subunit a, of the mitochondrial membrane ATP synthase complex (F(1)F(0) ATP synthase or Complex V) that produces ATP from ADP in the presence of a proton gradient across the membrane which is generated by electron transport complexes of the respiratory chain. ATP synthase complex consist of a soluble F(1) head domain - the catalytic core - and a membrane F(1) domain - the membrane proton channel. These two domains are linked by a central stalk rotating inside the F(1) region and a stationary peripheral stalk. During catalysis, ATP synthesis in the catalytic domain of F(1) is coupled via a rotary mechanism of the central stalk subunits to proton translocation. With the subunit c (ATP5MC1), forms the proton-conducting channel in the F(0) domain, that contains two crucial half-channels (inlet and outlet) that facilitate proton movement from the mitochondrial intermembrane space (IMS) into the matrix. Protons are taken up via the inlet half-channel and released through the outlet half-channel, following a Grotthuss mechanism. This Formosania lacustris (Oriental stream loach) protein is ATP synthase F(0) complex subunit a.